We begin with the raw amino-acid sequence, 348 residues long: MSLRDKLNELHERGLAEIQKSTDLKDVNQVRVSLLGKKGPITEVLRGMRDLDAEERPKVGAFANEIRDDLTAALTKRREELENAVLNARLAKEAIDVTLPGTPVAKGEPHVIQQIIDQIEDLFLGMGYQVLSGPEVEEDKYNFEMMNLPKNHPARDMQDTFYITKEILMRTQTSPMQARTLEKHDFSQGPLKMISPGVVYRRDTDDPTHSHQFHQVEGLVIDKHITMADLKGTLQVLAHELFGDKFDVRLRPSYFPFTEPSVETDITCFNCGGKGCNVCKNTGWIEVLGAGMVHPNVLKMAGVDPDVYGGFAFGVGPDRFAMLKYGVDDIRNFYLNDVRFLTQFTKKG.

Glu-259 provides a ligand contact to Mg(2+).

Belongs to the class-II aminoacyl-tRNA synthetase family. Phe-tRNA synthetase alpha subunit type 1 subfamily. As to quaternary structure, tetramer of two alpha and two beta subunits. Mg(2+) is required as a cofactor.

It is found in the cytoplasm. It catalyses the reaction tRNA(Phe) + L-phenylalanine + ATP = L-phenylalanyl-tRNA(Phe) + AMP + diphosphate + H(+). The chain is Phenylalanine--tRNA ligase alpha subunit from Levilactobacillus brevis (strain ATCC 367 / BCRC 12310 / CIP 105137 / JCM 1170 / LMG 11437 / NCIMB 947 / NCTC 947) (Lactobacillus brevis).